We begin with the raw amino-acid sequence, 156 residues long: 6,7-dimethyl-8-ribityllumazine synthase (156 aa).

5-amino-6-(D-ribitylamino)uracil-binding positions include Phe-23, 57 to 59 (AFE), and 81 to 83 (AVI). A (2S)-2-hydroxy-3-oxobutyl phosphate-binding site is contributed by 86–87 (ST). The Proton donor role is filled by His-89. Phe-114 provides a ligand contact to 5-amino-6-(D-ribitylamino)uracil. Arg-128 is a binding site for (2S)-2-hydroxy-3-oxobutyl phosphate.

Belongs to the DMRL synthase family.

It catalyses the reaction (2S)-2-hydroxy-3-oxobutyl phosphate + 5-amino-6-(D-ribitylamino)uracil = 6,7-dimethyl-8-(1-D-ribityl)lumazine + phosphate + 2 H2O + H(+). It functions in the pathway cofactor biosynthesis; riboflavin biosynthesis; riboflavin from 2-hydroxy-3-oxobutyl phosphate and 5-amino-6-(D-ribitylamino)uracil: step 1/2. Its function is as follows. Catalyzes the formation of 6,7-dimethyl-8-ribityllumazine by condensation of 5-amino-6-(D-ribitylamino)uracil with 3,4-dihydroxy-2-butanone 4-phosphate. This is the penultimate step in the biosynthesis of riboflavin. The protein is 6,7-dimethyl-8-ribityllumazine synthase of Campylobacter lari (strain RM2100 / D67 / ATCC BAA-1060).